The chain runs to 211 residues: Thiamine-phosphate synthase (211 aa).

Residues 44–48 and asparagine 75 contribute to the 4-amino-2-methyl-5-(diphosphooxymethyl)pyrimidine site; that span reads QYRNK. Positions 76 and 95 each coordinate Mg(2+). Residue serine 114 participates in 4-amino-2-methyl-5-(diphosphooxymethyl)pyrimidine binding. 140 to 142 is a 2-[(2R,5Z)-2-carboxy-4-methylthiazol-5(2H)-ylidene]ethyl phosphate binding site; it reads TKS. Lysine 143 contacts 4-amino-2-methyl-5-(diphosphooxymethyl)pyrimidine. Residue glycine 171 coordinates 2-[(2R,5Z)-2-carboxy-4-methylthiazol-5(2H)-ylidene]ethyl phosphate.

It belongs to the thiamine-phosphate synthase family. It depends on Mg(2+) as a cofactor.

The enzyme catalyses 2-[(2R,5Z)-2-carboxy-4-methylthiazol-5(2H)-ylidene]ethyl phosphate + 4-amino-2-methyl-5-(diphosphooxymethyl)pyrimidine + 2 H(+) = thiamine phosphate + CO2 + diphosphate. It catalyses the reaction 2-(2-carboxy-4-methylthiazol-5-yl)ethyl phosphate + 4-amino-2-methyl-5-(diphosphooxymethyl)pyrimidine + 2 H(+) = thiamine phosphate + CO2 + diphosphate. The catalysed reaction is 4-methyl-5-(2-phosphooxyethyl)-thiazole + 4-amino-2-methyl-5-(diphosphooxymethyl)pyrimidine + H(+) = thiamine phosphate + diphosphate. Its pathway is cofactor biosynthesis; thiamine diphosphate biosynthesis; thiamine phosphate from 4-amino-2-methyl-5-diphosphomethylpyrimidine and 4-methyl-5-(2-phosphoethyl)-thiazole: step 1/1. Functionally, condenses 4-methyl-5-(beta-hydroxyethyl)thiazole monophosphate (THZ-P) and 2-methyl-4-amino-5-hydroxymethyl pyrimidine pyrophosphate (HMP-PP) to form thiamine monophosphate (TMP). This is Thiamine-phosphate synthase from Koribacter versatilis (strain Ellin345).